We begin with the raw amino-acid sequence, 307 residues long: Protoheme IX farnesyltransferase (307 aa).

Helical transmembrane passes span Val29 to Pro49, Leu51 to Phe71, Ala101 to Ala120, Ala124 to Leu143, Ile151 to Gly171, Phe179 to Ile199, Arg218 to Pro238, Val239 to Leu259, and Val280 to Ala300.

The protein belongs to the UbiA prenyltransferase family. Protoheme IX farnesyltransferase subfamily.

The protein resides in the cell membrane. The catalysed reaction is heme b + (2E,6E)-farnesyl diphosphate + H2O = Fe(II)-heme o + diphosphate. Its pathway is porphyrin-containing compound metabolism; heme O biosynthesis; heme O from protoheme: step 1/1. Converts heme B (protoheme IX) to heme O by substitution of the vinyl group on carbon 2 of heme B porphyrin ring with a hydroxyethyl farnesyl side group. In Deinococcus geothermalis (strain DSM 11300 / CIP 105573 / AG-3a), this protein is Protoheme IX farnesyltransferase.